The chain runs to 460 residues: Ribulose bisphosphate carboxylase large chain (460 aa).

Lysine 4 is modified (N6,N6,N6-trimethyllysine). Positions 113 and 163 each coordinate substrate. The Proton acceptor role is filled by lysine 165. Residue lysine 167 coordinates substrate. Residues lysine 191, aspartate 193, and glutamate 194 each contribute to the Mg(2+) site. At lysine 191 the chain carries N6-carboxylysine. Catalysis depends on histidine 284, which acts as the Proton acceptor. Substrate is bound by residues arginine 285, histidine 317, and serine 369.

The protein belongs to the RuBisCO large chain family. Type I subfamily. As to quaternary structure, heterohexadecamer of 8 large chains and 8 small chains. Mg(2+) is required as a cofactor.

The protein localises to the plastid. The protein resides in the chloroplast. It carries out the reaction 2 (2R)-3-phosphoglycerate + 2 H(+) = D-ribulose 1,5-bisphosphate + CO2 + H2O. The enzyme catalyses D-ribulose 1,5-bisphosphate + O2 = 2-phosphoglycolate + (2R)-3-phosphoglycerate + 2 H(+). Functionally, ruBisCO catalyzes two reactions: the carboxylation of D-ribulose 1,5-bisphosphate, the primary event in carbon dioxide fixation, as well as the oxidative fragmentation of the pentose substrate in the photorespiration process. Both reactions occur simultaneously and in competition at the same active site. The chain is Ribulose bisphosphate carboxylase large chain from Cunninghamia lanceolata (China fir).